The sequence spans 868 residues: MAHSDRQCTNAAQTALSDAVESARKHNNGFVDPAHLALVLFKNEDGLASRVLRKLNAGTVLEPLAARVGALPEQRPRPRSITFSSDGGCAQHRRAEANRVGDSLIAVDHLLIGLFECKEVEAIMKAAHASKKAVEGALLELRKGKKVTSEFQEENYQALEKYATDLCKLAEEGKLDPVIGRTDEVLRTIRVLSRRTKNNPILIGEPGVGKTAIAEGIAQRIVRGDVPDTLLNTRLFSLDLGALIAGSSLRGEFEERLKSVLNEVKESSNGVILFIDEIHLVLGAGKSGGSMDAANLLKPMLARGELRTIGATTLEEYRTYVEKDAAFERRFMPVYVTEPSVEECISILRGLKDRYEAHHGVQITDNAVVVAAQLANRYITNRFMPDKAIDLIDEACANVRVQLSSRPEAIDILERKKRQLEIEAKALERDKEAASRERLKLVKADIQRVEEELQPLVSKYNDERQRIDELQEMQSRLDEKKKLERAVRDGKMDLAADLQYNVIPLIQDRIRSLKEDIERQKATLVQEKVTEGDVAAVVARWTGIPVVKLSQTDRERLLNLSMHLHRRVKGQDEAVERVADAIIRARAGLSRPNSPTASFLFLGPTGVGKTELVKAVAAELFDDEKHMVRIDMSEYMEQHSVSRLIGAPPGYIGHDEGGQLTEPVRRRPHAVVLFDEVEKAHPNVYNVLLQVLDDGRLTDSRGRTVDFSNTIIVMTSNLGSEHLLNPEETNESYEVLRENVLAAVRSYFRPELINRLDDIVVFRRLRTEDLRGVVDNLIAGVNERLKSSGFSVLLDDGVKDFILEHGHDANMGARPLRRWIEKNIVTEIGRMLIAKELPPNSTLRVSLPEGGNKLTFGVKRGLTSDEWE.

The Clp R domain maps to 4–144 (SDRQCTNAAQ…EGALLELRKG (141 aa)). Repeat stretches follow at residues 8–75 (CTNA…PEQR) and 83–144 (FSSD…LRKG). The segment at 159–407 (LEKYATDLCK…NVRVQLSSRP (249 aa)) is i. ATP is bound by residues 204–211 (GEPGVGKT) and 603–610 (GPTGVGKT). The interval 529 to 720 (VTEGDVAAVV…IIVMTSNLGS (192 aa)) is II.

This sequence belongs to the ClpA/ClpB family.

The chain is Heat shock protein 100 (HSP100) from Trypanosoma brucei brucei.